Consider the following 234-residue polypeptide: UPF0502 protein Bphyt_5265 (234 aa).

Belongs to the UPF0502 family.

In Paraburkholderia phytofirmans (strain DSM 17436 / LMG 22146 / PsJN) (Burkholderia phytofirmans), this protein is UPF0502 protein Bphyt_5265.